An 890-amino-acid chain; its full sequence is Phosphotransferase RcsD (890 aa).

The Cytoplasmic portion of the chain corresponds to 1–21 (MRQKETTATTRFSLLPGSITR). Residues 22-42 (FFLLLIIVLLVTMGVMVQSAV) traverse the membrane as a helical segment. Residues 43 to 308 (NAWLKDKSYQ…GTLLLDTLQN (266 aa)) lie on the Periplasmic side of the membrane. The helical transmembrane segment at 309 to 329 (ILLPLLLNIGLLALALFGYTT) threads the bilayer. Topologically, residues 330–890 (FRHFSSRSTE…DIDSYVKSLL (561 aa)) are cytoplasmic. Residues 468–678 (NIGDALKEPA…RYSVHIKMLA (211 aa)) are histidine-like kinase. The HPt domain maps to 803–890 (AQLHASGYYA…DIDSYVKSLL (88 aa)). His842 carries the phosphohistidine modification.

The protein belongs to the RcsD family. In terms of assembly, interacts with RcsC and RcsB. Has a higher affinity for RcsB than for RcsC. In terms of processing, phosphorylated by RcsC.

The protein resides in the cell inner membrane. Functionally, component of the Rcs signaling system, which controls transcription of numerous genes. RcsD is a phosphotransfer intermediate between the sensor kinase RcsC and the response regulator RcsB. It acquires a phosphoryl group from RcsC and transfers it to RcsB. The system controls expression of genes involved in colanic acid capsule synthesis, biofilm formation and cell division. This chain is Phosphotransferase RcsD, found in Escherichia coli (strain K12).